The following is a 1449-amino-acid chain: Gag-Pol polyprotein (1449 aa).

Residue glycine 2 is the site of N-myristoyl glycine; by host attachment. Positions 16–22 match the Nuclear export signal motif; that stretch reads LEKIRLR. The Nuclear localization signal signature appears at 26–32; that stretch reads KKRYQLK. CCHC-type zinc fingers lie at residues 392-409 and 413-430; these read IKCW…QCRA and QGCW…KCPE. The segment at 442–494 is disordered; sequence GKEAPQFPHGPDASGADTNCSPRGSSCGSTEELHEDGQKAEGEQRETLQGGNG. The span at 457–470 shows a compositional bias: polar residues; it reads ADTNCSPRGSSCGS. Basic and acidic residues predominate over residues 472–487; that stretch reads EELHEDGQKAEGEQRE. The 70-residue stretch at 518–587 folds into the Peptidase A2 domain; that stretch reads VEVLLDTGAD…TPINIFGRNL (70 aa). Catalysis depends on aspartate 523, which acts as the For protease activity; shared with dimeric partner. The region spanning 641–831 is the Reverse transcriptase domain; the sequence is DGQLEEAPPT…PPFQWMGYEL (191 aa). Mg(2+)-binding residues include aspartate 707, aspartate 782, and aspartate 783. The interval 824-832 is RT 'primer grip'; that stretch reads FQWMGYELW. The short motif at 994–1010 is the Tryptophan repeat motif element; the sequence is WEQWWTDYWQVTWIPEW. An RNase H type-1 domain is found at 1030–1153; that stretch reads IQGAETFYVD…VDHLVSQGIR (124 aa). Positions 1039, 1074, 1094, and 1145 each coordinate Mg(2+). Residues 1159–1200 form an Integrase-type zinc finger; that stretch reads EKIEPAQEEHEKYHSNVKELVFKFGLPRLVAKQIVDTCDKCH. Zn(2+)-binding residues include histidine 1168, histidine 1172, cysteine 1196, and cysteine 1199. In terms of domain architecture, Integrase catalytic spans 1210-1360; that stretch reads VNAELGTWQM…TPAERLVNMI (151 aa). Mg(2+) contacts are provided by aspartate 1220 and aspartate 1272. Positions 1379–1426 form a DNA-binding region, integrase-type; it reads FRVYYREGRDQLWKGPGELLWKGEGAVILKVGTEIKVVPRRKAKIIKD.

As to quaternary structure, homotrimer. Interacts with gp41 (via C-terminus). In terms of assembly, homodimer. The active site consists of two apposed aspartic acid residues. Heterodimer of p66 RT and p51 RT (RT p66/p51). Heterodimerization of RT is essential for DNA polymerase activity. Despite the sequence identities, p66 RT and p51 RT have distinct folding. As to quaternary structure, homotetramer; may further associate as a homohexadecamer. It depends on Mg(2+) as a cofactor. In terms of processing, specific enzymatic cleavages by the viral protease yield mature proteins. The protease is released by autocatalytic cleavage. The polyprotein is cleaved during and after budding, this process is termed maturation. Proteolytic cleavage of p66 RT removes the RNase H domain to yield the p51 RT subunit. Capsid protein p24 is phosphorylated.

Its subcellular location is the virion. The protein resides in the host nucleus. The protein localises to the host cytoplasm. It is found in the host cell membrane. It carries out the reaction Specific for a P1 residue that is hydrophobic, and P1' variable, but often Pro.. It catalyses the reaction Endohydrolysis of RNA in RNA/DNA hybrids. Three different cleavage modes: 1. sequence-specific internal cleavage of RNA. Human immunodeficiency virus type 1 and Moloney murine leukemia virus enzymes prefer to cleave the RNA strand one nucleotide away from the RNA-DNA junction. 2. RNA 5'-end directed cleavage 13-19 nucleotides from the RNA end. 3. DNA 3'-end directed cleavage 15-20 nucleotides away from the primer terminus.. The catalysed reaction is 3'-end directed exonucleolytic cleavage of viral RNA-DNA hybrid.. The enzyme catalyses DNA(n) + a 2'-deoxyribonucleoside 5'-triphosphate = DNA(n+1) + diphosphate. The viral protease is inhibited by many synthetic protease inhibitors (PIs), such as amprenavir, atazanavir, indinavir, loprinavir, nelfinavir, ritonavir and saquinavir. RT can be inhibited either by nucleoside RT inhibitors (NRTIs) or by non nucleoside RT inhibitors (NNRTIs). NRTIs act as chain terminators, whereas NNRTIs inhibit DNA polymerization by binding a small hydrophobic pocket near the RT active site and inducing an allosteric change in this region. Classical NRTIs are abacavir, adefovir (PMEA), didanosine (ddI), lamivudine (3TC), stavudine (d4T), tenofovir (PMPA), zalcitabine (ddC), and zidovudine (AZT). Classical NNRTIs are atevirdine (BHAP U-87201E), delavirdine, efavirenz (DMP-266), emivirine (I-EBU), and nevirapine (BI-RG-587). The tritherapies used as a basic effective treatment of AIDS associate two NRTIs and one NNRTI. Use of protease inhibitors in tritherapy regimens permit more ambitious therapeutic strategies. In terms of biological role, gag-Pol polyprotein and Gag polyprotein may regulate their own translation, by the binding genomic RNA in the 5'-UTR. At low concentration, Gag-Pol and Gag would promote translation, whereas at high concentration, the polyproteins encapsidate genomic RNA and then shut off translation. Its function is as follows. Matrix protein p17 has two main functions: in infected cell, it targets Gag and Gag-pol polyproteins to the plasma membrane via a multipartite membrane-binding signal, that includes its myristointegration complex. The myristoylation signal and the NLS exert conflicting influences its subcellular localization. The key regulation of these motifs might be phosphorylation of a portion of MA molecules on the C-terminal tyrosine at the time of virus maturation, by virion-associated cellular tyrosine kinase. Implicated in the release from host cell mediated by Vpu. Capsid protein p24 forms the conical core that encapsulates the genomic RNA-nucleocapsid complex in the virion. The core is constituted by capsid protein hexamer subunits. The core is disassembled soon after virion entry. Interaction with host PPIA/CYPA protects the virus from restriction by host TRIM5-alpha and from an unknown antiviral activity in host cells. This capsid restriction by TRIM5 is one of the factors which restricts SIV to the simian species. Functionally, nucleocapsid protein p7 encapsulates and protects viral dimeric unspliced (genomic) RNA. Binds these RNAs through its zinc fingers. Facilitates rearangement of nucleic acid secondary structure during retrotranscription of genomic RNA. This capability is referred to as nucleic acid chaperone activity. In terms of biological role, the aspartyl protease mediates proteolytic cleavages of Gag and Gag-Pol polyproteins during or shortly after the release of the virion from the plasma membrane. Cleavages take place as an ordered, step-wise cascade to yield mature proteins. This process is called maturation. Displays maximal activity during the budding process just prior to particle release from the cell. Also cleaves Nef and Vif, probably concomitantly with viral structural proteins on maturation of virus particles. Hydrolyzes host EIF4GI and PABP1 in order to shut off the capped cellular mRNA translation. The resulting inhibition of cellular protein synthesis serves to ensure maximal viral gene expression and to evade host immune response. Its function is as follows. Reverse transcriptase/ribonuclease H (RT) is a multifunctional enzyme that converts the viral dimeric RNA genome into dsDNA in the cytoplasm, shortly after virus entry into the cell. This enzyme displays a DNA polymerase activity that can copy either DNA or RNA templates, and a ribonuclease H (RNase H) activity that cleaves the RNA strand of RNA-DNA heteroduplexes in a partially processive 3' to 5' endonucleasic mode. Conversion of viral genomic RNA into dsDNA requires many steps. A tRNA binds to the primer-binding site (PBS) situated at the 5'-end of the viral RNA. RT uses the 3' end of the tRNA primer to perform a short round of RNA-dependent minus-strand DNA synthesis. The reading proceeds through the U5 region and ends after the repeated (R) region which is present at both ends of viral RNA. The portion of the RNA-DNA heteroduplex is digested by the RNase H, resulting in a ssDNA product attached to the tRNA primer. This ssDNA/tRNA hybridizes with the identical R region situated at the 3' end of viral RNA. This template exchange, known as minus-strand DNA strong stop transfer, can be either intra- or intermolecular. RT uses the 3' end of this newly synthesized short ssDNA to perform the RNA-dependent minus-strand DNA synthesis of the whole template. RNase H digests the RNA template except for two polypurine tracts (PPTs) situated at the 5'-end and near the center of the genome. It is not clear if both polymerase and RNase H activities are simultaneous. RNase H can probably proceed both in a polymerase-dependent (RNA cut into small fragments by the same RT performing DNA synthesis) and a polymerase-independent mode (cleavage of remaining RNA fragments by free RTs). Secondly, RT performs DNA-directed plus-strand DNA synthesis using the PPTs that have not been removed by RNase H as primers. PPTs and tRNA primers are then removed by RNase H. The 3' and 5' ssDNA PBS regions hybridize to form a circular dsDNA intermediate. Strand displacement synthesis by RT to the PBS and PPT ends produces a blunt ended, linear dsDNA copy of the viral genome that includes long terminal repeats (LTRs) at both ends. Integrase catalyzes viral DNA integration into the host chromosome, by performing a series of DNA cutting and joining reactions. This enzyme activity takes place after virion entry into a cell and reverse transcription of the RNA genome in dsDNA. The first step in the integration process is 3' processing. This step requires a complex comprising the viral genome, matrix protein, Vpr and integrase. This complex is called the pre-integration complex (PIC). The integrase protein removes 2 nucleotides from each 3' end of the viral DNA, leaving recessed CA OH's at the 3' ends. In the second step, the PIC enters cell nucleus. This process is mediated through integrase and Vpr proteins, and allows the virus to infect a non dividing cell. This ability to enter the nucleus is specific of lentiviruses, other retroviruses cannot and rely on cell division to access cell chromosomes. In the third step, termed strand transfer, the integrase protein joins the previously processed 3' ends to the 5' ends of strands of target cellular DNA at the site of integration. The 5'-ends are produced by integrase-catalyzed staggered cuts, 5 bp apart. A Y-shaped, gapped, recombination intermediate results, with the 5'-ends of the viral DNA strands and the 3' ends of target DNA strands remaining unjoined, flanking a gap of 5 bp. The last step is viral DNA integration into host chromosome. This involves host DNA repair synthesis in which the 5 bp gaps between the unjoined strands are filled in and then ligated. Since this process occurs at both cuts flanking the SIV genome, a 5 bp duplication of host DNA is produced at the ends of SIV integration. Alternatively, Integrase may catalyze the excision of viral DNA just after strand transfer, this is termed disintegration. This Cercopithecidae (Old World monkeys) protein is Gag-Pol polyprotein (gag-pol).